The following is a 177-amino-acid chain: MRIAITGTPGVGKTTISKVLRDRLGIKVIDITEAVKKYKLYTEKDEDMDSYVIDFEKLEKFIDEIEEKEKTIILDGHVSHLLNPDYIIVLRCNPEIIKERLEKRGYKPKKVLENIQAEILDVCLCESKGKVYEIDTTNRDVENIVDEIIEAIKHKKERKGVVDWTEKYFDYLTLEIK.

The ATP site is built by Gly-10, Gly-12, Lys-13, Thr-14, and Thr-15. The NMP stretch occupies residues 30-53 (DITEAVKKYKLYTEKDEDMDSYVI). An LID region spans residues 103-113 (KRGYKPKKVLE). Arg-104 lines the ATP pocket.

The protein belongs to the adenylate kinase family. AK6 subfamily. In terms of assembly, interacts with uS11. Not a structural component of 40S pre-ribosomes, but transiently interacts with them by binding to uS11.

It catalyses the reaction AMP + ATP = 2 ADP. It carries out the reaction ATP + H2O = ADP + phosphate + H(+). In terms of biological role, broad-specificity nucleoside monophosphate (NMP) kinase that catalyzes the reversible transfer of the terminal phosphate group between nucleoside triphosphates and monophosphates. Also has ATPase activity. Involved in the late maturation steps of the 30S ribosomal particles, specifically 16S rRNA maturation. While NMP activity is not required for ribosome maturation, ATPase activity is. Associates transiently with small ribosomal subunit protein uS11. ATP hydrolysis breaks the interaction with uS11. May temporarily remove uS11 from the ribosome to enable a conformational change of the ribosomal RNA that is needed for the final maturation step of the small ribosomal subunit. This chain is Putative adenylate kinase, found in Methanocaldococcus jannaschii (strain ATCC 43067 / DSM 2661 / JAL-1 / JCM 10045 / NBRC 100440) (Methanococcus jannaschii).